Consider the following 225-residue polypeptide: ATP-dependent Clp protease proteolytic subunit (225 aa).

Ser126 (nucleophile) is an active-site residue. His151 is an active-site residue.

The protein belongs to the peptidase S14 family. Fourteen ClpP subunits assemble into 2 heptameric rings which stack back to back to give a disk-like structure with a central cavity, resembling the structure of eukaryotic proteasomes.

It is found in the cytoplasm. It carries out the reaction Hydrolysis of proteins to small peptides in the presence of ATP and magnesium. alpha-casein is the usual test substrate. In the absence of ATP, only oligopeptides shorter than five residues are hydrolyzed (such as succinyl-Leu-Tyr-|-NHMec, and Leu-Tyr-Leu-|-Tyr-Trp, in which cleavage of the -Tyr-|-Leu- and -Tyr-|-Trp bonds also occurs).. In terms of biological role, cleaves peptides in various proteins in a process that requires ATP hydrolysis. Has a chymotrypsin-like activity. Plays a major role in the degradation of misfolded proteins. This Psychrobacter arcticus (strain DSM 17307 / VKM B-2377 / 273-4) protein is ATP-dependent Clp protease proteolytic subunit.